The chain runs to 402 residues: Tyrosine--tRNA ligase (402 aa).

The short motif at 47–56 (PTAPDLHLGH) is the 'HIGH' region element. The 'KMSKS' region motif lies at 232–236 (KMSKS). ATP is bound at residue Lys-235. Residues 341–401 (VGVLDVLKQI…GKKRFMKLNI (61 aa)) form the S4 RNA-binding domain.

It belongs to the class-I aminoacyl-tRNA synthetase family. TyrS type 2 subfamily. Homodimer.

The protein localises to the cytoplasm. The catalysed reaction is tRNA(Tyr) + L-tyrosine + ATP = L-tyrosyl-tRNA(Tyr) + AMP + diphosphate + H(+). Catalyzes the attachment of tyrosine to tRNA(Tyr) in a two-step reaction: tyrosine is first activated by ATP to form Tyr-AMP and then transferred to the acceptor end of tRNA(Tyr). The polypeptide is Tyrosine--tRNA ligase (Helicobacter pylori (strain J99 / ATCC 700824) (Campylobacter pylori J99)).